The chain runs to 265 residues: Undecaprenyl-diphosphatase (265 aa).

The next 7 membrane-spanning stretches (helical) occupy residues 38–58 (SDMF…IIYW), 80–100 (LIVA…LGFE), 107–127 (PIAW…WAAA), 135–155 (ITWL…VFPG), 175–195 (AAAT…ASGY), 213–233 (ALAI…KWLL), and 244–264 (FAIY…TGMI).

Belongs to the UppP family.

The protein resides in the cell inner membrane. The enzyme catalyses di-trans,octa-cis-undecaprenyl diphosphate + H2O = di-trans,octa-cis-undecaprenyl phosphate + phosphate + H(+). Catalyzes the dephosphorylation of undecaprenyl diphosphate (UPP). Confers resistance to bacitracin. The sequence is that of Undecaprenyl-diphosphatase from Rhizobium etli (strain ATCC 51251 / DSM 11541 / JCM 21823 / NBRC 15573 / CFN 42).